We begin with the raw amino-acid sequence, 218 residues long: Small ribosomal subunit protein uS3c (218 aa).

The KH type-2 domain occupies 47-117 (VRTHIRNSSN…KLKITLSEID (71 aa)).

It belongs to the universal ribosomal protein uS3 family. In terms of assembly, part of the 30S ribosomal subunit.

Its subcellular location is the plastid. It localises to the chloroplast. This chain is Small ribosomal subunit protein uS3c (rps3), found in Spirogyra maxima (Green alga).